A 380-amino-acid chain; its full sequence is G-protein coupled receptor (380 aa).

The next 7 membrane-spanning stretches (helical) occupy residues Val26–Ile46, Leu60–Val80, Phe97–Thr117, Val145–Ile165, Ala184–Leu204, Ile220–Ala240, and Val275–Ile295. Cys95 and Cys170 are oxidised to a cystine. The tract at residues Ser328–Gly380 is disordered.

The protein belongs to the G-protein coupled receptor 1 family.

It localises to the host membrane. In Elephas maximus (Indian elephant), this protein is G-protein coupled receptor.